Consider the following 313-residue polypeptide: 2,3-dihydroxyphenylpropionate/2,3-dihydroxicinnamic acid 1,2-dioxygenase (313 aa).

His115 serves as the catalytic Proton donor. His179 (proton acceptor) is an active-site residue.

It belongs to the LigB/MhpB extradiol dioxygenase family. In terms of assembly, homotetramer. It depends on Fe(2+) as a cofactor.

The enzyme catalyses 3-(2,3-dihydroxyphenyl)propanoate + O2 = (2Z,4E)-2-hydroxy-6-oxonona-2,4-dienedioate + H(+). It catalyses the reaction (2E)-3-(2,3-dihydroxyphenyl)prop-2-enoate + O2 = (2Z,4E,7E)-2-hydroxy-6-oxonona-2,4,7-trienedioate + H(+). It participates in aromatic compound metabolism; 3-phenylpropanoate degradation. Its function is as follows. Catalyzes the non-heme iron(II)-dependent oxidative cleavage of 2,3-dihydroxyphenylpropionic acid and 2,3-dihydroxicinnamic acid into 2-hydroxy-6-ketononadienedioate and 2-hydroxy-6-ketononatrienedioate, respectively. The protein is 2,3-dihydroxyphenylpropionate/2,3-dihydroxicinnamic acid 1,2-dioxygenase of Xanthobacter autotrophicus (strain ATCC BAA-1158 / Py2).